We begin with the raw amino-acid sequence, 361 residues long: Chorismate synthase (361 aa).

Residues R48 and R54 each contribute to the NADP(+) site. Residues 125-127, 238-239, G278, 293-297, and R319 each bind FMN; these read RSS, NA, and KPTSS.

The protein belongs to the chorismate synthase family. Homotetramer. Requires FMNH2 as cofactor.

It carries out the reaction 5-O-(1-carboxyvinyl)-3-phosphoshikimate = chorismate + phosphate. It functions in the pathway metabolic intermediate biosynthesis; chorismate biosynthesis; chorismate from D-erythrose 4-phosphate and phosphoenolpyruvate: step 7/7. Catalyzes the anti-1,4-elimination of the C-3 phosphate and the C-6 proR hydrogen from 5-enolpyruvylshikimate-3-phosphate (EPSP) to yield chorismate, which is the branch point compound that serves as the starting substrate for the three terminal pathways of aromatic amino acid biosynthesis. This reaction introduces a second double bond into the aromatic ring system. This Methylobacillus flagellatus (strain ATCC 51484 / DSM 6875 / VKM B-1610 / KT) protein is Chorismate synthase.